Consider the following 458-residue polypeptide: Ribulose bisphosphate carboxylase large chain (458 aa).

Lysine 7 is modified (N6,N6,N6-trimethyllysine). Asparagine 116 and threonine 166 together coordinate substrate. Lysine 168 functions as the Proton acceptor in the catalytic mechanism. Substrate is bound at residue lysine 170. Mg(2+) contacts are provided by lysine 194, aspartate 196, and glutamate 197. An N6-carboxylysine modification is found at lysine 194. Residue histidine 287 is the Proton acceptor of the active site. Substrate contacts are provided by arginine 288, histidine 320, and serine 372.

The protein belongs to the RuBisCO large chain family. Type I subfamily. Heterohexadecamer of 8 large chains and 8 small chains; disulfide-linked. The disulfide link is formed within the large subunit homodimers. Requires Mg(2+) as cofactor. In terms of processing, the disulfide bond which can form in the large chain dimeric partners within the hexadecamer appears to be associated with oxidative stress and protein turnover.

It is found in the plastid. The protein localises to the chloroplast. The catalysed reaction is 2 (2R)-3-phosphoglycerate + 2 H(+) = D-ribulose 1,5-bisphosphate + CO2 + H2O. It carries out the reaction D-ribulose 1,5-bisphosphate + O2 = 2-phosphoglycolate + (2R)-3-phosphoglycerate + 2 H(+). In terms of biological role, ruBisCO catalyzes two reactions: the carboxylation of D-ribulose 1,5-bisphosphate, the primary event in carbon dioxide fixation, as well as the oxidative fragmentation of the pentose substrate in the photorespiration process. Both reactions occur simultaneously and in competition at the same active site. The chain is Ribulose bisphosphate carboxylase large chain from Gladiolus gueinzii (Coastal gladiolus).